Here is a 275-residue protein sequence, read N- to C-terminus: Membrane protein insertase YidC 1 (275 aa).

The signal sequence occupies residues Met1 to Ala25. Cys26 is lipidated: N-palmitoyl cysteine. The S-diacylglycerol cysteine moiety is linked to residue Cys26. 5 consecutive transmembrane segments (helical) span residues Ser58–Phe78, Tyr129–Leu149, Leu171–Leu191, Val198–Phe216, and Val222–Leu240.

It belongs to the OXA1/ALB3/YidC family. Type 2 subfamily.

It localises to the cell membrane. Required for the insertion and/or proper folding and/or complex formation of integral membrane proteins into the membrane. Involved in integration of membrane proteins that insert both dependently and independently of the Sec translocase complex, as well as at least some lipoproteins. This is Membrane protein insertase YidC 1 from Streptococcus pyogenes serotype M6 (strain ATCC BAA-946 / MGAS10394).